A 101-amino-acid chain; its full sequence is Iron-sulfur cluster assembly protein CyaY (101 aa).

This sequence belongs to the frataxin family.

Functionally, involved in iron-sulfur (Fe-S) cluster assembly. May act as a regulator of Fe-S biogenesis. The sequence is that of Iron-sulfur cluster assembly protein CyaY from Haemophilus influenzae (strain 86-028NP).